The following is a 136-amino-acid chain: Succinate dehydrogenase assembly factor 3, mitochondrial (136 aa).

The N-terminal 24 residues, 1 to 24 (MRASMVRRMAAAASSSASSSLRPA), are a transit peptide targeting the mitochondrion.

It belongs to the complex I LYR family. SDHAF3 subfamily. As to quaternary structure, interacts with the iron-sulfur protein subunit within the SDH catalytic dimer.

Its subcellular location is the mitochondrion matrix. Functionally, plays an essential role in the assembly of succinate dehydrogenase (SDH), an enzyme complex (also referred to as respiratory complex II) that is a component of both the tricarboxylic acid (TCA) cycle and the mitochondrial electron transport chain, and which couples the oxidation of succinate to fumarate with the reduction of ubiquinone (coenzyme Q) to ubiquinol. Promotes maturation of the iron-sulfur protein subunit of the SDH catalytic dimer, protecting it from the deleterious effects of oxidants. May act together with SDHAF1. The sequence is that of Succinate dehydrogenase assembly factor 3, mitochondrial from Pyricularia oryzae (strain 70-15 / ATCC MYA-4617 / FGSC 8958) (Rice blast fungus).